The chain runs to 349 residues: Sperm acrosomal protein FSA-ACR.1 (349 aa).

Residues 1-8 form the signal peptide; it reads MKEVYLVG. A disordered region spans residues 1-265; it reads MKEVYLVGYA…EQPSGIPPSS (265 aa). Basic and acidic residues predominate over residues 63–114; it reads TSGEHTSVEHASAEHSSTEHTSGEHASGEHTSGERATGEHTSSEHATSEHTS. Polar residues-rich tracts occupy residues 117 to 142 and 154 to 171; these read QPSG…SGEQ and SGEQ…TSGE. The span at 178–189 shows a compositional bias: basic and acidic residues; it reads PSGEHAVAEKPS. The span at 221–248 shows a compositional bias: low complexity; the sequence is EQASIEKASSEQASAEQASAEQASSEQA. A glycan (N-linked (GlcNAc...) asparagine) is linked at N342.

To acrosomal proteins SP-10. As to expression, testis.

It localises to the cytoplasmic vesicle. The protein resides in the secretory vesicle. The protein localises to the acrosome. In Vulpes vulpes (Red fox), this protein is Sperm acrosomal protein FSA-ACR.1.